The chain runs to 274 residues: Leucyl/phenylalanyl-tRNA--protein transferase (274 aa).

It belongs to the L/F-transferase family.

It localises to the cytoplasm. The catalysed reaction is N-terminal L-lysyl-[protein] + L-leucyl-tRNA(Leu) = N-terminal L-leucyl-L-lysyl-[protein] + tRNA(Leu) + H(+). It catalyses the reaction N-terminal L-arginyl-[protein] + L-leucyl-tRNA(Leu) = N-terminal L-leucyl-L-arginyl-[protein] + tRNA(Leu) + H(+). The enzyme catalyses L-phenylalanyl-tRNA(Phe) + an N-terminal L-alpha-aminoacyl-[protein] = an N-terminal L-phenylalanyl-L-alpha-aminoacyl-[protein] + tRNA(Phe). In terms of biological role, functions in the N-end rule pathway of protein degradation where it conjugates Leu, Phe and, less efficiently, Met from aminoacyl-tRNAs to the N-termini of proteins containing an N-terminal arginine or lysine. In Psychrobacter cryohalolentis (strain ATCC BAA-1226 / DSM 17306 / VKM B-2378 / K5), this protein is Leucyl/phenylalanyl-tRNA--protein transferase.